Here is a 147-residue protein sequence, read N- to C-terminus: Hemoglobin subunit beta-2 (147 aa).

A Globin domain is found at 3-147 (HWTAEEKATI…LVAALSHGYF (145 aa)). Heme b-binding residues include H64 and H93.

It belongs to the globin family. As to quaternary structure, heterotetramer of two alpha chains and two beta chains. As to expression, red blood cells.

In terms of biological role, this is a larval (tadpole) beta-globin. The chain is Hemoglobin subunit beta-2 (hbb2) from Xenopus tropicalis (Western clawed frog).